A 464-amino-acid polypeptide reads, in one-letter code: Glycine--tRNA ligase (464 aa).

Positions 104 and 175 each coordinate substrate. Residues 207–209, 217–222, 292–293, and 336–339 contribute to the ATP site; these read RNE, FRTREF, EL, and GVNR. 222–226 lines the substrate pocket; sequence FEQME. Position 332-336 (332-336) interacts with substrate; it reads EPALG.

This sequence belongs to the class-II aminoacyl-tRNA synthetase family. In terms of assembly, homodimer.

The protein localises to the cytoplasm. The catalysed reaction is tRNA(Gly) + glycine + ATP = glycyl-tRNA(Gly) + AMP + diphosphate. In terms of biological role, catalyzes the attachment of glycine to tRNA(Gly). This Leptospira borgpetersenii serovar Hardjo-bovis (strain JB197) protein is Glycine--tRNA ligase.